Here is a 444-residue protein sequence, read N- to C-terminus: MTQSIWNERRLGEDKLRRNDHRNPYQRDRARILHSAAFRRLQAKTQVLGVGMNDFYRTRLTHSLEVSQIGTGIRAQLKQKQPEFNPLLNSMSIIESLCLAHDIGHPPFGHGGEIALNYMMRAHGGFEGNGQTFRILTRLEPYTEFYGMNLCRRTLLGILKYPAPYSRLCREQPNETVQHFRQLKPSQWPPVKGIFDDDLAILDWVLEPLSKADKQLFLSSYTVADGQHKRTRYKSLDCSIMELADDIAYAVHDLEDAIVMGIVSEQQWHNDVTQVLCNSEDEWLQNEFATMSLRLFSAKHHQRKDAIGTLVNGFVTAISINEVEGFDEPLLKYNAALEPAFDIALNVLKQFVFKYVIRKPEIQMLEYKGHQIVMELFEAFISDPERLLPLNTQERWIASEKQGENSHRVIADYISGMTDEFAARLHQHLFSPKSGSMMELNCEF.

Residues 59 to 250 enclose the HD domain; that stretch reads RLTHSLEVSQ…MELADDIAYA (192 aa).

Belongs to the dGTPase family. Type 2 subfamily.

This Shewanella halifaxensis (strain HAW-EB4) protein is Deoxyguanosinetriphosphate triphosphohydrolase-like protein.